Reading from the N-terminus, the 159-residue chain is Phosphopantetheine adenylyltransferase (159 aa).

Position 10 (Thr-10) interacts with substrate. Residues 10–11 (TF) and His-18 contribute to the ATP site. Substrate-binding residues include Lys-42, Met-74, and Arg-88. ATP is bound by residues 89-91 (GLR), Glu-99, and 124-130 (WSFISSS).

It belongs to the bacterial CoaD family. In terms of assembly, homohexamer. Mg(2+) is required as a cofactor.

The protein resides in the cytoplasm. It catalyses the reaction (R)-4'-phosphopantetheine + ATP + H(+) = 3'-dephospho-CoA + diphosphate. It functions in the pathway cofactor biosynthesis; coenzyme A biosynthesis; CoA from (R)-pantothenate: step 4/5. In terms of biological role, reversibly transfers an adenylyl group from ATP to 4'-phosphopantetheine, yielding dephospho-CoA (dPCoA) and pyrophosphate. This chain is Phosphopantetheine adenylyltransferase, found in Klebsiella pneumoniae (strain 342).